Reading from the N-terminus, the 431-residue chain is Adenylosuccinate lyase (431 aa).

N(6)-(1,2-dicarboxyethyl)-AMP is bound by residues 4 to 5 (RY), 67 to 69 (RHD), and 93 to 94 (TS). The active-site Proton donor/acceptor is the His141. Residue Gln212 participates in N(6)-(1,2-dicarboxyethyl)-AMP binding. The Proton donor/acceptor role is filled by Ser262. Residues Ser263, 268-270 (KRN), Asn276, and 307-311 (SAERI) contribute to the N(6)-(1,2-dicarboxyethyl)-AMP site.

This sequence belongs to the lyase 1 family. Adenylosuccinate lyase subfamily. As to quaternary structure, homodimer and homotetramer. Residues from neighboring subunits contribute catalytic and substrate-binding residues to each active site.

The enzyme catalyses N(6)-(1,2-dicarboxyethyl)-AMP = fumarate + AMP. The catalysed reaction is (2S)-2-[5-amino-1-(5-phospho-beta-D-ribosyl)imidazole-4-carboxamido]succinate = 5-amino-1-(5-phospho-beta-D-ribosyl)imidazole-4-carboxamide + fumarate. It participates in purine metabolism; AMP biosynthesis via de novo pathway; AMP from IMP: step 2/2. The protein operates within purine metabolism; IMP biosynthesis via de novo pathway; 5-amino-1-(5-phospho-D-ribosyl)imidazole-4-carboxamide from 5-amino-1-(5-phospho-D-ribosyl)imidazole-4-carboxylate: step 2/2. In terms of biological role, catalyzes two reactions in de novo purine nucleotide biosynthesis. Catalyzes the breakdown of 5-aminoimidazole- (N-succinylocarboxamide) ribotide (SAICAR or 2-[5-amino-1-(5-phospho-beta-D-ribosyl)imidazole-4-carboxamido]succinate) to 5-aminoimidazole-4-carboxamide ribotide (AICAR or 5-amino-1-(5-phospho-beta-D-ribosyl)imidazole-4-carboxamide) and fumarate, and of adenylosuccinate (ADS or N(6)-(1,2-dicarboxyethyl)-AMP) to adenosine monophosphate (AMP) and fumarate. The sequence is that of Adenylosuccinate lyase (purB) from Staphylococcus aureus (strain USA300).